The sequence spans 469 residues: Trehalose-6-phosphate synthase (469 aa).

Residue Arg-10 participates in D-glucose 6-phosphate binding. 22–23 serves as a coordination point for UDP-alpha-D-glucose; it reads GG. D-glucose 6-phosphate contacts are provided by Tyr-77 and Asp-131. 2 residues coordinate UDP-alpha-D-glucose: Arg-262 and Lys-267. Residue Arg-300 coordinates D-glucose 6-phosphate. 365 to 369 contributes to the UDP-alpha-D-glucose binding site; it reads LVAKE.

This sequence belongs to the glycosyltransferase 20 family. As to quaternary structure, homotetramer.

The enzyme catalyses D-glucose 6-phosphate + UDP-alpha-D-glucose = alpha,alpha-trehalose 6-phosphate + UDP + H(+). The protein operates within glycan biosynthesis; trehalose biosynthesis. Functionally, probably involved in the osmoprotection via the biosynthesis of trehalose. Catalyzes the transfer of glucose from UDP-alpha-D-glucose (UDP-Glc) to D-glucose 6-phosphate (Glc-6-P) to form trehalose-6-phosphate. Acts with retention of the anomeric configuration of the UDP-sugar donor. This is Trehalose-6-phosphate synthase from Sodalis glossinidius (strain morsitans).